The following is a 313-amino-acid chain: Uracil-DNA glycosylase (313 aa).

Polar residues predominate over residues 1-12; it reads MIGQKTLYSFFS. Positions 1–25 are interaction with FAM72A; sequence MIGQKTLYSFFSPSPARKRHAPSPE. The segment at 1 to 29 is mitochondrial localization signal; it reads MIGQKTLYSFFSPSPARKRHAPSPEPAVQ. The interval 1–68 is disordered; the sequence is MIGQKTLYSF…GTPPSSPLSA (68 aa). A phosphoserine mark is found at Ser12 and Ser14. The Important for nuclear sorting signature appears at 17–19; it reads RKR. Ser23 carries the post-translational modification Phosphoserine. Over residues 43 to 53 the composition is skewed to low complexity; that stretch reads AAAIPAKKAPA. Thr60 carries the post-translational modification Phosphothreonine. Ser64 is modified (phosphoserine). The tract at residues 73-88 is interaction with RPA2; it reads RIQRNKAAALLRLAAR. Gln153 is a binding site for uracil. Residue Asp154 is the Proton acceptor of the active site. His157 is a binding site for dsDNA. Position 167 (Phe167) interacts with uracil. Ser178 serves as a coordination point for dsDNA. Asn213 serves as a coordination point for uracil. Residues Ser256, His277, Ser279, Ser282, and Arg285 each contribute to the dsDNA site. Position 277 (His277) interacts with uracil. Lys295 carries the N6-acetyllysine modification.

Belongs to the uracil-DNA glycosylase (UDG) superfamily. UNG family. Monomer. As to quaternary structure, interacts with RPA2 subunit of the RPA trimer; this interaction mediates UNG2 recruitment to RPA-coated single-stranded DNA at stalled replication forks. Interacts with PCNA; this interaction mediates UNG2 recruitment to S-phase replication foci. Interacts (via N-terminus) with FAM72A. In terms of assembly, (Microbial infection) Interacts with HIV-1 Vpr. Post-translationally, processed by mitochondrial serine or cysteine peptidases to yield a mature dominant form that lacks N-terminal 29 amino acid residues and another minor form that lacks N-terminal 77 amino acid residues. The catalytic activity of UNG1 delta29 is not product-inhibited by AP sites.

It is found in the mitochondrion. The protein localises to the nucleus. It carries out the reaction Hydrolyzes single-stranded DNA or mismatched double-stranded DNA and polynucleotides, releasing free uracil.. The enzyme catalyses a 2'-deoxyuridine in single-stranded DNA + H2O = a 2'-deoxyribose 5'-monophosphate in single-stranded DNA + uracil. It catalyses the reaction a 2'-deoxyuridine in double-stranded DNA + H2O = a 2'-deoxyribose 5'-monophosphate in double-stranded DNA + uracil. Uracil-DNA glycosylase that hydrolyzes the N-glycosidic bond between uracil and deoxyribose in single- and double-stranded DNA (ssDNA and dsDNA) to release a free uracil residue and form an abasic (apurinic/apyrimidinic; AP) site. Excises uracil residues arising as a result of misincorporation of dUMP residues by DNA polymerase during replication or due to spontaneous or enzymatic deamination of cytosine. Mediates error-free base excision repair (BER) of uracil at replication forks. According to the model, it is recruited by PCNA to S-phase replication forks to remove misincorporated uracil at U:A base mispairs in nascent DNA strands. Via trimeric RPA it is recruited to ssDNA stretches ahead of the polymerase to allow detection and excision of deaminated cytosines prior to replication. The resultant AP sites temporarily stall replication, allowing time to repair the lesion. Mediates mutagenic uracil processing involved in antibody affinity maturation. Processes AICDA-induced U:G base mispairs at variable immunoglobulin (Ig) regions leading to the generation of transversion mutations. Operates at switch sites of Ig constant regions where it mediates Ig isotype class switch recombination. Excises AICDA-induced uracil residues forming AP sites that are subsequently nicked by APEX1 endonuclease. The accumulation of staggered nicks in opposite strands results in double strand DNA breaks that are finally resolved via non-homologous end joining repair pathway. The chain is Uracil-DNA glycosylase from Homo sapiens (Human).